The following is a 115-amino-acid chain: UPF0212 protein MJ0068 (115 aa).

Belongs to the UPF0212 family.

The sequence is that of UPF0212 protein MJ0068 from Methanocaldococcus jannaschii (strain ATCC 43067 / DSM 2661 / JAL-1 / JCM 10045 / NBRC 100440) (Methanococcus jannaschii).